The following is a 441-amino-acid chain: Cobyrinate a,c-diamide synthase (441 aa).

The GATase cobBQ-type domain occupies 243 to 434 (TVAVADDAAF…AHVHPESTAF (192 aa)). Cys323 acts as the Nucleophile in catalysis.

The protein belongs to the CobB/CbiA family. Requires Mg(2+) as cofactor.

It carries out the reaction cob(II)yrinate + 2 L-glutamine + 2 ATP + 2 H2O = cob(II)yrinate a,c diamide + 2 L-glutamate + 2 ADP + 2 phosphate + 2 H(+). The protein operates within cofactor biosynthesis; adenosylcobalamin biosynthesis; cob(II)yrinate a,c-diamide from sirohydrochlorin (anaerobic route): step 10/10. Its function is as follows. Catalyzes the ATP-dependent amidation of the two carboxylate groups at positions a and c of cobyrinate, using either L-glutamine or ammonia as the nitrogen source. The chain is Cobyrinate a,c-diamide synthase from Halobacterium salinarum (strain ATCC 700922 / JCM 11081 / NRC-1) (Halobacterium halobium).